The primary structure comprises 911 residues: Anoctamin-6 (911 aa).

Over 1–301 (MQMMTRKVLL…YGEKIGIYFA (301 aa)) the chain is Cytoplasmic. A helical transmembrane segment spans residues 302–322 (WLGYYTQMLLLAAVVGVACFL). Topologically, residues 323 to 376 (YGYLDQDNCTWSKEVCDPDIGGQILMCPQCDRLCPFWRLNITCESSKKLCIFDS) are extracellular. Asn330 carries N-linked (GlcNAc...) asparagine glycosylation. Cystine bridges form between Cys331-Cys372, Cys338-Cys365, Cys349-Cys807, Cys352-Cys356, and Cys596-Cys601. Residue Asn362 is glycosylated (N-linked (GlcNAc...) asparagine). A helical transmembrane segment spans residues 377–397 (FGTLIFAVFMGVWVTLFLEFW). Over 398 to 456 (KRRQAELEYEWDTVELQQEEQARPEYEAQCNHVVINEITQEEERIPFTTCGKCIRVTLC) the chain is Cytoplasmic. A helical transmembrane segment spans residues 457–477 (ASAVFFWILLIIASVIGIIVY). Over 478 to 510 (RLSVFIVFSTTLPKNPNGTDPIQKYLTPQMATS) the chain is Extracellular. N-linked (GlcNAc...) asparagine glycosylation occurs at Asn494. The helical transmembrane segment at 511–531 (ITASIISFIIIMILNTIYEKV) threads the bilayer. Topologically, residues 532 to 552 (AIMITNFELPRTQTDYENSLT) are cytoplasmic. A helical transmembrane segment spans residues 553–573 (MKMFLFQFVNYYSSCFYIAFF). Over 574–602 (KGKFVGYPGDPVYLLGKYRSEECDPGGCL) the chain is Extracellular. A helical transmembrane segment spans residues 603–622 (LELTTQLTIIMGGKAIWNNI). Residues 623–664 (QEVLLPWVMNLIGRYKRVSGSEKITPRWEQDYHLQPMGKLGL) lie on the Cytoplasmic side of the membrane. 3 residues coordinate Ca(2+): Glu624, Glu667, and Glu670. The next 2 helical transmembrane spans lie at 665-685 (FYEY…VASF) and 686-706 (PLAP…DAWK). Residues 707–723 (LTTQFRRMVPEKAQDIG) lie on the Cytoplasmic side of the membrane. The chain crosses the membrane as a helical span at residues 724–744 (AWQPIMQGIAILAVVTNAMII). At 745 to 837 (AFTSDMIPRL…YWHVIAAKLA (93 aa)) the chain is on the extracellular side. N-linked (GlcNAc...) asparagine glycans are attached at residues Asn778, Asn785, and Asn803. A helical membrane pass occupies residues 838–858 (FIIVMEHIIYSVKFFISYAIP). The Cytoplasmic portion of the chain corresponds to 859–911 (DVSKITKSKIKREKYLTQKLLHESHLKDLTKNMGIIAERIGGTVDNSVRPKLE).

This sequence belongs to the anoctamin family. As to quaternary structure, homodimer. Predominant expression seen in epithelial tissues. Also found in skeletal system where it is primarily expressed in osteoblasts.

The protein resides in the cell membrane. It carries out the reaction a 1,2-diacyl-sn-glycero-3-phospho-L-serine(in) = a 1,2-diacyl-sn-glycero-3-phospho-L-serine(out). The enzyme catalyses a beta-D-galactosyl-(1&lt;-&gt;1')-N-acylsphing-4-enine(out) = a beta-D-galactosyl-(1&lt;-&gt;1')-N-acylsphing-4-enine(in). It catalyses the reaction a 1,2-diacyl-sn-glycero-3-phosphocholine(in) = a 1,2-diacyl-sn-glycero-3-phosphocholine(out). With respect to regulation, exhibits synergistic gating by Ca(2+) and voltage. Inhibited by some non-specific cation channel blockers such as: ruthenium red, 2-aminoethyl diphenylborinate (2APB), gadolinium and cadmium ions. Its function is as follows. Small-conductance calcium-activated nonselective cation (SCAN) channel which acts as a regulator of phospholipid scrambling in platelets, osteoblasts and fetal thymocytes. Phospholipid scrambling results in surface exposure of phosphatidylserine which in platelets is essential to trigger the clotting system whereas in osteoblasts is essential for the deposition of hydroxyapatite during bone mineralization. Has calcium-dependent phospholipid scramblase activity; scrambles phosphatidylserine, phosphatidylcholine and galactosylceramide. Can generate outwardly rectifying chloride channel currents in airway epithelial cells and Jurkat T lymphocytes. The protein is Anoctamin-6 (Ano6) of Mus musculus (Mouse).